A 380-amino-acid polypeptide reads, in one-letter code: N-acetylcysteine deacetylase (380 aa).

5 residues coordinate Ni(2+): cysteine 98, histidine 100, glutamate 134, histidine 158, and histidine 350.

The protein belongs to the peptidase M20 family. A divalent metal cation serves as cofactor.

The enzyme catalyses N-acetyl-L-cysteine + H2O = L-cysteine + acetate. It participates in amino-acid biosynthesis; L-cysteine biosynthesis. Probably catalyzes the deacetylation of N-acetylcysteine (NAC) to acetate and cysteine. Is involved in a S-(2-succino)cysteine (2SC) degradation pathway that allows B.subtilis to grow on 2SC as a sole sulfur source, via its metabolization to cysteine. This chain is N-acetylcysteine deacetylase, found in Bacillus subtilis (strain 168).